We begin with the raw amino-acid sequence, 216 residues long: MSVKIHYQNTHFITSAPDIRHLPADEGIEIAFAGRSNAGKSSALNRLTNQKNLAKTSKTPGRTQLINLFKVTEGCHIVDLPGYGFAQVPLEMKNKWQKSLGEYLQKRECLKGLVVLMDIRHPMKDLDQQMIFWAIESRIPVQVLLTKADKLKSGARKAELLKVRKLAETFGGDVQVDVYSSLKGLGVDQLRAKLDTWFAPALAHLQEDEEGSNSAE.

Positions 26–200 (EGIEIAFAGR…RAKLDTWFAP (175 aa)) constitute an EngB-type G domain. GTP-binding positions include 34–41 (GRSNAGKS), 61–65 (GRTQL), 79–82 (DLPG), 146–149 (TKAD), and 179–181 (YSS). Mg(2+) is bound by residues Ser-41 and Thr-63.

Belongs to the TRAFAC class TrmE-Era-EngA-EngB-Septin-like GTPase superfamily. EngB GTPase family. It depends on Mg(2+) as a cofactor.

Functionally, necessary for normal cell division and for the maintenance of normal septation. This is Probable GTP-binding protein EngB from Vibrio vulnificus (strain YJ016).